Here is a 156-residue protein sequence, read N- to C-terminus: ATP synthase subunit b (156 aa).

A helical membrane pass occupies residues 7–29; that stretch reads LLGQAISFALFVWFCMKYVWPPL.

The protein belongs to the ATPase B chain family. F-type ATPases have 2 components, F(1) - the catalytic core - and F(0) - the membrane proton channel. F(1) has five subunits: alpha(3), beta(3), gamma(1), delta(1), epsilon(1). F(0) has three main subunits: a(1), b(2) and c(10-14). The alpha and beta chains form an alternating ring which encloses part of the gamma chain. F(1) is attached to F(0) by a central stalk formed by the gamma and epsilon chains, while a peripheral stalk is formed by the delta and b chains.

It is found in the cell inner membrane. In terms of biological role, f(1)F(0) ATP synthase produces ATP from ADP in the presence of a proton or sodium gradient. F-type ATPases consist of two structural domains, F(1) containing the extramembraneous catalytic core and F(0) containing the membrane proton channel, linked together by a central stalk and a peripheral stalk. During catalysis, ATP synthesis in the catalytic domain of F(1) is coupled via a rotary mechanism of the central stalk subunits to proton translocation. Its function is as follows. Component of the F(0) channel, it forms part of the peripheral stalk, linking F(1) to F(0). The protein is ATP synthase subunit b of Vibrio parahaemolyticus serotype O3:K6 (strain RIMD 2210633).